The primary structure comprises 374 residues: Putative glutamate--cysteine ligase 2-2 (374 aa).

Belongs to the glutamate--cysteine ligase type 2 family. YbdK subfamily.

The catalysed reaction is L-cysteine + L-glutamate + ATP = gamma-L-glutamyl-L-cysteine + ADP + phosphate + H(+). ATP-dependent carboxylate-amine ligase which exhibits weak glutamate--cysteine ligase activity. The protein is Putative glutamate--cysteine ligase 2-2 of Rhodococcus jostii (strain RHA1).